The chain runs to 126 residues: DNA-directed RNA polymerase I subunit RPA12 (126 aa).

Zn(2+)-binding residues include Cys20, Cys23, Cys38, Cys41, Cys87, and Cys90. The segment at 20–41 adopts a C4-type zinc-finger fold; the sequence is CSDCGSVLPLPGAQDTVTCIRC. Residues 83–123 form a TFIIS-type zinc finger; it reads VDRRCPRCGHEGMAYHTRQMRSADEGQTVFYTCTNCKFQEK. Positions 106–107 match the Hairpin motif; that stretch reads DE. Zn(2+)-binding residues include Cys115 and Cys118.

Belongs to the archaeal RpoM/eukaryotic RPA12/RPB9/RPC11 RNA polymerase family. Component of the RNA polymerase I (Pol I) complex consisting of 13 subunits: a ten-subunit catalytic core composed of POLR1A/RPA1, POLR1B/RPA2, POLR1C/RPAC1, POLR1D/RPAC2, POLR1H/RPA12, POLR2E/RPABC1, POLR2F/RPABC2, POLR2H/RPABC3, POLR2K/RPABC4 and POLR2L/RPABC5; a mobile stalk subunit POLR1F/RPA43 protruding from the core and additional subunits homologous to general transcription factors POLR1E/RPA49 and POLR1G/RPA34. Part of Pol I pre-initiation complex (PIC), in which Pol I core assembles with RRN3 and promoter-bound UTBF and SL1/TIF-IB complex.

The protein localises to the nucleus. It localises to the nucleolus. Its function is as follows. Core component of RNA polymerase I (Pol I), a DNA-dependent RNA polymerase which synthesizes ribosomal RNA precursors using the four ribonucleoside triphosphates as substrates. Can mediate Pol I proofreading of the nascent RNA transcript. Anchors into the Pol I active site to monitor transcription fidelity and cleave mis-incorporated 5'-ribonucleotides. This chain is DNA-directed RNA polymerase I subunit RPA12, found in Homo sapiens (Human).